Here is a 925-residue protein sequence, read N- to C-terminus: Protein translocase subunit SecA (925 aa).

ATP is bound by residues Gln-87, Gly-105–Thr-109, and Asp-515. Zn(2+) contacts are provided by Cys-909, Cys-911, Cys-920, and His-921.

The protein belongs to the SecA family. Monomer and homodimer. Part of the essential Sec protein translocation apparatus which comprises SecA, SecYEG and auxiliary proteins SecDF-YajC and YidC. Zn(2+) serves as cofactor.

It is found in the cell inner membrane. It localises to the cytoplasm. The enzyme catalyses ATP + H2O + cellular proteinSide 1 = ADP + phosphate + cellular proteinSide 2.. Functionally, part of the Sec protein translocase complex. Interacts with the SecYEG preprotein conducting channel. Has a central role in coupling the hydrolysis of ATP to the transfer of proteins into and across the cell membrane, serving both as a receptor for the preprotein-SecB complex and as an ATP-driven molecular motor driving the stepwise translocation of polypeptide chains across the membrane. The sequence is that of Protein translocase subunit SecA from Cupriavidus taiwanensis (strain DSM 17343 / BCRC 17206 / CCUG 44338 / CIP 107171 / LMG 19424 / R1) (Ralstonia taiwanensis (strain LMG 19424)).